Consider the following 149-residue polypeptide: METAGKAKKGFGGRKGGPRKKSVTRSVKAGLQFPVGRIGRYLKKGRYAQRVGTGAPVYLAAVLEYLAAEVLELAGNAARDNKKTRIIPRHLLLAVRNDEELGKLLAGVTFAHGGVLPNINPVLLPKKTAEKAAKEPKSPSKAGKSPKKA.

The span at Met-1 to Val-23 shows a compositional bias: basic residues. Disordered stretches follow at residues Met-1 to Arg-25 and Lys-127 to Ala-149. Residues Lys-127 to Ser-138 are compositionally biased toward basic and acidic residues. 2 short sequence motifs (SPKK motif) span residues Ser-138–Lys-141 and Ser-145–Lys-148.

It belongs to the histone H2A family. The nucleosome is a histone octamer containing two molecules each of H2A, H2B, H3 and H4 assembled in one H3-H4 heterotetramer and two H2A-H2B heterodimers. The octamer wraps approximately 147 bp of DNA.

Its subcellular location is the nucleus. The protein localises to the chromosome. Its function is as follows. Core component of nucleosome. Nucleosomes wrap and compact DNA into chromatin, limiting DNA accessibility to the cellular machineries which require DNA as a template. Histones thereby play a central role in transcription regulation, DNA repair, DNA replication and chromosomal stability. DNA accessibility is regulated via a complex set of post-translational modifications of histones, also called histone code, and nucleosome remodeling. This chain is Histone H2A, found in Petroselinum crispum (Parsley).